Here is an 820-residue protein sequence, read N- to C-terminus: Mitogen-activated protein kinase kinase kinase kinase 2 (820 aa).

A Protein kinase domain is found at 16-273 (FELLQRVGAG…AEKLLQHPFT (258 aa)). ATP contacts are provided by residues 22–30 (VGAGTYGDV) and Lys-45. Asp-136 serves as the catalytic Proton acceptor. The tract at residues 294–314 (LGTPSPEDCELETYDMFPDTI) is PEST1. Residue Ser-328 is modified to Phosphoserine. The segment at 344–360 (ETDPLNEPWEEEWTLLG) is PEST2. The segment at 387 to 442 (SEFQELDSPDDTMGTIKRAPFLGPLPTDPPAEEPLSSPPGTLPPPPSGPNSSPLLP) is disordered. The residue at position 394 (Ser-394) is a Phosphoserine. The interval 405 to 448 (APFLGPLPTDPPAEEPLSSPPGTLPPPPSGPNSSPLLPTAWATM) is PEST3. The segment covering 422-434 (SSPPGTLPPPPSG) has biased composition (pro residues). The region spanning 482 to 793 (PLRIHAAVTW…IFRVLGAHRD (312 aa)) is the CNH domain.

Belongs to the protein kinase superfamily. STE Ser/Thr protein kinase family. STE20 subfamily. As to quaternary structure, interacts with TRAF2, TRAF6, MAP3K1/MEKK1 and MAP3K11/MLK3. Interacts with RAB8A. Mg(2+) is required as a cofactor. Polyubiquitinated through 'Lys-48'-polyubiquitin chains, allowing proteasomal turnover. Ubiquitination requires the kinase activity of MAP4K2/GCK. Post-translationally, autophosphorylated in response to tumor necrosis factor (TNF), endotoxins or pro-inflammatory stimuli. Autophosphorylation leads to activation. As to expression, highly expressed in germinal center but not mantle zone B-cells. Also expressed in lung, brain and placenta and at lower levels in other tissues examined.

It localises to the cytoplasm. The protein localises to the basolateral cell membrane. The protein resides in the golgi apparatus membrane. The enzyme catalyses L-seryl-[protein] + ATP = O-phospho-L-seryl-[protein] + ADP + H(+). It carries out the reaction L-threonyl-[protein] + ATP = O-phospho-L-threonyl-[protein] + ADP + H(+). Its activity is regulated as follows. The tumor necrosis factor (TNF), as well as endotoxins and pro-inflammatory stimuli such as polyinosine-polycytidine (poly(IC)), lipopolysaccharides (LPS), peptidoglycan (PGN), flagellin, or lipid A activate MAP4K2 by promoting its autophosphorylation. Its function is as follows. Serine/threonine-protein kinase which acts as an essential component of the MAP kinase signal transduction pathway. Acts as a MAPK kinase kinase kinase (MAP4K) and is an upstream activator of the stress-activated protein kinase/c-Jun N-terminal kinase (SAP/JNK) signaling pathway and to a lesser extent of the p38 MAPKs signaling pathway. Required for the efficient activation of JNKs by TRAF6-dependent stimuli, including pathogen-associated molecular patterns (PAMPs) such as polyinosine-polycytidine (poly(IC)), lipopolysaccharides (LPS), lipid A, peptidoglycan (PGN), or bacterial flagellin. To a lesser degree, IL-1 and engagement of CD40 also stimulate MAP4K2-mediated JNKs activation. The requirement for MAP4K2/GCK is most pronounced for LPS signaling, and extends to LPS stimulation of c-Jun phosphorylation and induction of IL-8. Enhances MAP3K1 oligomerization, which may relieve N-terminal mediated MAP3K1 autoinhibition and lead to activation following autophosphorylation. Also mediates the SAP/JNK signaling pathway and the p38 MAPKs signaling pathway through activation of the MAP3Ks MAP3K10/MLK2 and MAP3K11/MLK3. May play a role in the regulation of vesicle targeting or fusion. regulation of vesicle targeting or fusion. Activator of the Hippo signaling pathway which plays a pivotal role in organ size control and tumor suppression by restricting proliferation and promoting apoptosis. MAP4Ks act in parallel to and are partially redundant with STK3/MST2 and STK4/MST2 in the phosphorylation and activation of LATS1/2, and establish MAP4Ks as components of the expanded Hippo pathway. The sequence is that of Mitogen-activated protein kinase kinase kinase kinase 2 from Homo sapiens (Human).